The primary structure comprises 306 residues: Aspartate carbamoyltransferase catalytic subunit (306 aa).

Positions 51 and 52 each coordinate carbamoyl phosphate. L-aspartate is bound at residue Lys79. Residues Arg101, His129, and Gln132 each coordinate carbamoyl phosphate. L-aspartate is bound by residues Arg162 and Arg213. The carbamoyl phosphate site is built by Ala254 and Pro255.

It belongs to the aspartate/ornithine carbamoyltransferase superfamily. ATCase family. In terms of assembly, heterododecamer (2C3:3R2) of six catalytic PyrB chains organized as two trimers (C3), and six regulatory PyrI chains organized as three dimers (R2).

The enzyme catalyses carbamoyl phosphate + L-aspartate = N-carbamoyl-L-aspartate + phosphate + H(+). It participates in pyrimidine metabolism; UMP biosynthesis via de novo pathway; (S)-dihydroorotate from bicarbonate: step 2/3. Its function is as follows. Catalyzes the condensation of carbamoyl phosphate and aspartate to form carbamoyl aspartate and inorganic phosphate, the committed step in the de novo pyrimidine nucleotide biosynthesis pathway. In Bacillus thuringiensis (strain Al Hakam), this protein is Aspartate carbamoyltransferase catalytic subunit.